Reading from the N-terminus, the 1128-residue chain is Major DNA-binding protein (1128 aa).

The required for nuclear localization stretch occupies residues 1104–1128 (LGGGGQGSGGRRKRRLATVLPGLEV).

The protein belongs to the herpesviridae major DNA-binding protein family. In terms of assembly, homooligomers. Forms double-helical filaments necessary for the formation of replication compartments within the host nucleus. Interacts with the origin-binding protein. Interacts with the helicase primase complex; this interaction stimulates primer synthesis activity of the helicase-primase complex. Interacts with the DNA polymerase. Interacts with the alkaline exonuclease; this interaction increases its nuclease processivity.

It is found in the virion tegument. The protein resides in the host nucleus. Plays several crucial roles in viral infection. Participates in the opening of the viral DNA origin to initiate replication by interacting with the origin-binding protein. May disrupt loops, hairpins and other secondary structures present on ssDNA to reduce and eliminate pausing of viral DNA polymerase at specific sites during elongation. Promotes viral DNA recombination by performing strand-transfer, characterized by the ability to transfer a DNA strand from a linear duplex to a complementary single-stranded DNA circle. Can also catalyze the renaturation of complementary single strands. Additionally, reorganizes the host cell nucleus, leading to the formation of prereplicative sites and replication compartments. This process is driven by the protein which can form double-helical filaments in the absence of DNA. The sequence is that of Major DNA-binding protein from Epstein-Barr virus (strain GD1) (HHV-4).